Here is a 337-residue protein sequence, read N- to C-terminus: RNA 3'-terminal phosphate cyclase (337 aa).

Residues glutamine 101 and 282–285 (HMSD) each bind ATP. Histidine 306 serves as the catalytic Tele-AMP-histidine intermediate.

The protein belongs to the RNA 3'-terminal cyclase family. Type 1 subfamily.

It localises to the cytoplasm. It catalyses the reaction a 3'-end 3'-phospho-ribonucleotide-RNA + ATP = a 3'-end 2',3'-cyclophospho-ribonucleotide-RNA + AMP + diphosphate. Catalyzes the conversion of 3'-phosphate to a 2',3'-cyclic phosphodiester at the end of RNA. The mechanism of action of the enzyme occurs in 3 steps: (A) adenylation of the enzyme by ATP; (B) transfer of adenylate to an RNA-N3'P to produce RNA-N3'PP5'A; (C) and attack of the adjacent 2'-hydroxyl on the 3'-phosphorus in the diester linkage to produce the cyclic end product. The biological role of this enzyme is unknown but it is likely to function in some aspects of cellular RNA processing. The chain is RNA 3'-terminal phosphate cyclase from Saccharolobus islandicus (strain M.16.27) (Sulfolobus islandicus).